A 337-amino-acid polypeptide reads, in one-letter code: Manganese-dependent ADP-ribose/CDP-alcohol diphosphatase (337 aa).

The residue at position 1 (Met-1) is an N-acetylmethionine. The Zn(2+) site is built by Asp-25, Gln-27, Asp-74, Asn-110, His-241, His-278, and His-280.

This sequence belongs to the ADPRibase-Mn family. Monomer. Requires Mg(2+) as cofactor.

It catalyses the reaction CDP-choline + H2O = phosphocholine + CMP + 2 H(+). It carries out the reaction ADP-D-ribose + H2O = D-ribose 5-phosphate + AMP + 2 H(+). The enzyme catalyses CDP-glycerol + H2O = sn-glycerol 3-phosphate + CMP + 2 H(+). In terms of biological role, hydrolyzes ADP-ribose, IDP-ribose, CDP-glycerol, CDP-choline and CDP-ethanolamine, but not other non-reducing ADP-sugars or CDP-glucose. May be involved in immune cell signaling as suggested by the second-messenger role of ADP-ribose, which activates TRPM2 as a mediator of oxidative/nitrosative stress. The protein is Manganese-dependent ADP-ribose/CDP-alcohol diphosphatase (ADPRM) of Bos taurus (Bovine).